The primary structure comprises 1088 residues: MATTEDTPASAGPRYAPEDPTLPQPWKGLIDGSTGILYYWNPETNVTQYERPSAPPPHSATTPKLAQIPVPSSGQGHQAQHEQAKPVGHVSQQHGFQQQPQQFPSQHVRPQMMQQHPAQQMPQQSGQQFPQQQSQSMVPHPHGHPSVQTYQPTTQQQQQGMQNQHSQMPQQLSHQYAHSQQHYMGFRPHMQTQGLQNSHQTPQGGPHGQQFPSQQEYNSLAPKREGDEFHGGKKTGFSQPHLPNSERSPSQNTHFEANAASQKTNANLAMAQKCNGPQANAAVTQFQQPGANLIHQQLGPRAPNQMDQTMLHQKSHVSPFQSNNTYENNLQSRPGNDSYVNMRMEVPVRGAQPLHPAAMPKDIRISGGPPTNADPAMGQTGHGTYGHAGPAFPNKSLVRPHFVTSPDVPHLSPVEIYRKQHEVTTTGENIPAPYITFESSGLPPEILRELLSAGFPSPTPIQAQTWPIALQSRDIVAIAKTGSGKTLGYLIPAFILLRHCRNDSRNGPTVLILAPTRELATQIQDEALRFGRSSRISCTCLYGGAPKGPQLKELERGADIVVATPGRLNDILEMKMIDFQQVSLLVLDEADRMLDMGFEPQIRKIVNEIPPRRQTLMYTATWPKEVRKIASDLLVNPVQVNIGRVDELAANKAITQYVEVVPQMEKERRLEQILRSQERGSKVIIFCSTKRLCDHLARSVGRHFGAVVIHGDKTQGERDWVLNQFRSGKSCVLIATDVAARGLDIKDIRVVINYDFPTGVEDYVHRIGRTGRAGATGVAFTFFTEQDWKYAPDLIKVLEGANQQVPPQVRDIAMRGGGGGGPGYSQDRRGMVNRFDSGGGGTRWDSGGGFGGRGGGFSGREGGFGGREGGFGGREGGFGGRGGRFGMRDDSFGRGGNRGRGFTGPDAGHMNVGGRGGFGRFGNNNNMESRGFGRGSGRGFGRGVGRFDNRRGRSRSRSPDLVRPRRRSSSYSRSRSRSGSYSRSRSRSRSWSRSRSRSPRHSRDRGGHNRSRSYSRSPSPVYERRDRAPRVSGFDIKPPVESVVNLDMNAAAAIENVVPTSLSERQGNGVVESEVEAALVRPVVDEEP.

Disordered stretches follow at residues 1-28 (MATT…PWKG), 47-178 (TQYE…QYAH), and 192-254 (TQGL…QNTH). Residue Ala-2 is modified to N-acetylalanine. The region spanning 20-54 (PTLPQPWKGLIDGSTGILYYWNPETNVTQYERPSA) is the WW domain. Composition is skewed to low complexity over residues 87–137 (VGHV…SQSM), 148–171 (QTYQ…MPQQ), and 200–215 (QTPQ…PSQQ). Over residues 222 to 231 (PKREGDEFHG) the composition is skewed to basic and acidic residues. Polar residues predominate over residues 236–254 (GFSQPHLPNSERSPSQNTH). Residues 435–463 (ITFESSGLPPEILRELLSAGFPSPTPIQA) carry the Q motif motif. One can recognise a Helicase ATP-binding domain in the interval 466 to 640 (WPIALQSRDI…SDLLVNPVQV (175 aa)). 479–486 (AKTGSGKT) contacts ATP. The DEAD box signature appears at 588–591 (DEAD). The region spanning 669-813 (RLEQILRSQE…QVPPQVRDIA (145 aa)) is the Helicase C-terminal domain. Composition is skewed to gly residues over residues 861–885 (EGGF…GGRF), 893–902 (GRGGNRGRGF), 911–920 (NVGGRGGFGR), and 932–944 (FGRG…GRGV). The interval 861-1033 (EGGFGGREGG…RRDRAPRVSG (173 aa)) is disordered. Basic and acidic residues predominate over residues 945 to 963 (GRFDNRRGRSRSRSPDLVR). Over residues 969 to 983 (SSYSRSRSRSGSYSR) the composition is skewed to low complexity. The span at 984–1013 (SRSRSRSWSRSRSRSPRHSRDRGGHNRSRS) shows a compositional bias: basic residues.

This sequence belongs to the DEAD box helicase family. DDX5/DBP2 subfamily.

It localises to the nucleus. It carries out the reaction ATP + H2O = ADP + phosphate + H(+). In terms of biological role, ATP-dependent RNA helicase involved nonsense-mediated mRNA decay and ribosome biogenesis through rRNA processing. The polypeptide is DEAD-box ATP-dependent RNA helicase 40 (RH40) (Arabidopsis thaliana (Mouse-ear cress)).